A 544-amino-acid chain; its full sequence is Probable protein kinase UbiB (544 aa).

A Protein kinase domain is found at 123–505 (EFDEQALASA…GRQKSHNVRS (383 aa)). Residues 129–137 (LASASIAQV) and K156 each bind ATP. The active-site Proton acceptor is the D291. The chain crosses the membrane as a helical span at residues 522-540 (LPLWLSCGTLVTVLLVLLL).

The protein belongs to the ABC1 family. UbiB subfamily.

Its subcellular location is the cell inner membrane. It participates in cofactor biosynthesis; ubiquinone biosynthesis [regulation]. Is probably a protein kinase regulator of UbiI activity which is involved in aerobic coenzyme Q (ubiquinone) biosynthesis. This chain is Probable protein kinase UbiB, found in Actinobacillus pleuropneumoniae serotype 7 (strain AP76).